The primary structure comprises 302 residues: Methionyl-tRNA formyltransferase (302 aa).

106–109 provides a ligand contact to (6S)-5,6,7,8-tetrahydrofolate; the sequence is SVLP.

The protein belongs to the Fmt family.

The catalysed reaction is L-methionyl-tRNA(fMet) + (6R)-10-formyltetrahydrofolate = N-formyl-L-methionyl-tRNA(fMet) + (6S)-5,6,7,8-tetrahydrofolate + H(+). Functionally, attaches a formyl group to the free amino group of methionyl-tRNA(fMet). The formyl group appears to play a dual role in the initiator identity of N-formylmethionyl-tRNA by promoting its recognition by IF2 and preventing the misappropriation of this tRNA by the elongation apparatus. The sequence is that of Methionyl-tRNA formyltransferase from Hydrogenobaculum sp. (strain Y04AAS1).